The chain runs to 392 residues: Selenide, water dikinase 1 (392 aa).

Ser2 carries the N-acetylserine modification. Cys31 is an active-site residue. ATP contacts are provided by residues Lys32, 67 to 69 (GMD), Asp87, Asp110, and 161 to 164 (GGQT). Residue Asp69 participates in Mg(2+) binding. Position 110 (Asp110) interacts with Mg(2+). Mg(2+) is bound at residue Asp265.

Belongs to the selenophosphate synthase 1 family. Class II subfamily. In terms of assembly, homodimer. It depends on Mg(2+) as a cofactor.

Its subcellular location is the cell membrane. It is found in the nucleus membrane. The catalysed reaction is hydrogenselenide + ATP + H2O = selenophosphate + AMP + phosphate + 2 H(+). Functionally, synthesizes selenophosphate from selenide and ATP. This is Selenide, water dikinase 1 (Sephs1) from Mus musculus (Mouse).